A 69-amino-acid polypeptide reads, in one-letter code: DNA gyrase inhibitor YacG (69 aa).

Zn(2+) contacts are provided by cysteine 7, cysteine 10, cysteine 26, and cysteine 30.

Belongs to the DNA gyrase inhibitor YacG family. As to quaternary structure, interacts with GyrB. Zn(2+) is required as a cofactor.

In terms of biological role, inhibits all the catalytic activities of DNA gyrase by preventing its interaction with DNA. Acts by binding directly to the C-terminal domain of GyrB, which probably disrupts DNA binding by the gyrase. This is DNA gyrase inhibitor YacG from Shewanella baltica (strain OS155 / ATCC BAA-1091).